The primary structure comprises 653 residues: 4-alpha-glucanotransferase (653 aa).

Catalysis depends on Glu-123, which acts as the Nucleophile. Asp-214 functions as the Proton donor in the catalytic mechanism.

Belongs to the glycosyl hydrolase 57 family.

The enzyme catalyses Transfers a segment of a (1-&gt;4)-alpha-D-glucan to a new position in an acceptor, which may be glucose or a (1-&gt;4)-alpha-D-glucan.. This Thermococcus kodakarensis (strain ATCC BAA-918 / JCM 12380 / KOD1) (Pyrococcus kodakaraensis (strain KOD1)) protein is 4-alpha-glucanotransferase.